Here is a 447-residue protein sequence, read N- to C-terminus: Beta-glucuronosyltransferase GlcAT14A (447 aa).

Topologically, residues 1–33 (MKKLRSYYSNVRHHQNHHHHHHHHSNIVSSERK) are cytoplasmic. Residues 34 to 54 (WIFFPLLIGSIFALFLLFLTT) traverse the membrane as a helical; Signal-anchor for type II membrane protein segment. At 55-447 (TLTSPTGGVR…TENFRSKQCK (393 aa)) the chain is on the lumenal side. N-linked (GlcNAc...) asparagine glycans are attached at residues asparagine 151, asparagine 200, asparagine 329, and asparagine 405.

Belongs to the glycosyltransferase 14 family.

It localises to the golgi apparatus membrane. Functionally, beta-glucuronosyltransferase involved in the biosynthesis of type II arabinogalactan (AG). Modifies both the beta-1,6-linked galactan and beta-1,3-linked galactan present in type II AG. Transfers glucuronate to beta-1,6-galactooligosaccharides with degrees of polymerization ranging from 3 to 11. Transfers glucuronate to beta-1,3-galactooligosaccharides with degrees of polymerization ranging from 5 to 7. The addition of glucuronate at the O6 position may terminate galactose chain extension. Required for cell elongation during seedling growth. This chain is Beta-glucuronosyltransferase GlcAT14A, found in Arabidopsis thaliana (Mouse-ear cress).